A 763-amino-acid chain; its full sequence is Phosphoglycerol transferase I (763 aa).

The next 4 helical transmembrane spans lie at 1-21 (MSEL…AWKA), 26-46 (WWFA…ITLF), 77-97 (ILPG…LGWI), and 108-128 (FGYS…SPAF).

This sequence belongs to the OpgB family.

The protein localises to the cell inner membrane. The catalysed reaction is a phosphatidylglycerol + a membrane-derived-oligosaccharide D-glucose = a 1,2-diacyl-sn-glycerol + a membrane-derived-oligosaccharide 6-(glycerophospho)-D-glucose.. Its pathway is glycan metabolism; osmoregulated periplasmic glucan (OPG) biosynthesis. Functionally, transfers a phosphoglycerol residue from phosphatidylglycerol to the membrane-bound nascent glucan backbones. The polypeptide is Phosphoglycerol transferase I (Escherichia coli O139:H28 (strain E24377A / ETEC)).